Consider the following 407-residue polypeptide: Prolyl hydroxylase EGLN2 (407 aa).

Composition is skewed to low complexity over residues 1–24 (MDSP…SSEP) and 57–75 (ASAG…TASP). Disordered regions lie at residues 1–34 (MDSP…RARM), 50–89 (CPGV…GELR), and 108–157 (AAQG…CSSG). A Bipartite nuclear localization signal motif is present at residues 89-134 (RPLQSEGAAALVTKGCQRLAAQGARPEAPKRKWAEDGGDAPSPSKR). Position 130 is a phosphoserine (Ser130). The segment at 225–235 (VSQRAIPPRSI) is beta(2)beta(3) 'finger-like' loop. The 99-residue stretch at 278 to 376 (GRTKAMVACY…RYAITVWYFD (99 aa)) folds into the Fe2OG dioxygenase domain. Fe cation is bound by residues His297, Asp299, and His358. Residue Arg367 participates in 2-oxoglutarate binding.

As to quaternary structure, interacts (preferably isoform p40) with SIAH2; the interaction targets both SIAH2 isoforms for proteasomal degradation in vitro. Interacts with LIMD1, WTIP and AJUBA. Fe(2+) is required as a cofactor. The cofactor is L-ascorbate. In terms of processing, ubiquitinated by SIAH1 and/or SIAH2 in response to the unfolded protein response (UPR), leading to its degradation. Expressed in adult and fetal heart, brain, liver, lung, skeletal muscle, and kidney. Also expressed in testis and placenta. Highest levels in adult brain, placenta, lung, kidney, and testis. Expressed in hormone responsive tissues, including normal and cancerous mammary, ovarian and prostate epithelium.

It is found in the nucleus. It catalyses the reaction L-prolyl-[protein] + 2-oxoglutarate + O2 = trans-4-hydroxy-L-prolyl-[protein] + succinate + CO2. The enzyme catalyses L-prolyl-[hypoxia-inducible factor alpha subunit] + 2-oxoglutarate + O2 = trans-4-hydroxy-L-prolyl-[hypoxia-inducible factor alpha subunit] + succinate + CO2. Functionally, prolyl hydroxylase that mediates hydroxylation of proline residues in target proteins, such as ATF4, IKBKB, CEP192 and HIF1A. Target proteins are preferentially recognized via a LXXLAP motif. Cellular oxygen sensor that catalyzes, under normoxic conditions, the post-translational formation of 4-hydroxyproline in hypoxia-inducible factor (HIF) alpha proteins. Hydroxylates a specific proline found in each of the oxygen-dependent degradation (ODD) domains (N-terminal, NODD, and C-terminal, CODD) of HIF1A. Also hydroxylates HIF2A. Has a preference for the CODD site for both HIF1A and HIF2A. Hydroxylated HIFs are then targeted for proteasomal degradation via the von Hippel-Lindau ubiquitination complex. Under hypoxic conditions, the hydroxylation reaction is attenuated allowing HIFs to escape degradation resulting in their translocation to the nucleus, heterodimerization with HIF1B, and increased expression of hypoxy-inducible genes. EGLN2 is involved in regulating hypoxia tolerance and apoptosis in cardiac and skeletal muscle. Also regulates susceptibility to normoxic oxidative neuronal death. Links oxygen sensing to cell cycle and primary cilia formation by hydroxylating the critical centrosome component CEP192 which promotes its ubiquitination and subsequent proteasomal degradation. Hydroxylates IKBKB, mediating NF-kappa-B activation in hypoxic conditions. Also mediates hydroxylation of ATF4, leading to decreased protein stability of ATF4. This is Prolyl hydroxylase EGLN2 from Homo sapiens (Human).